The sequence spans 275 residues: Glutamate racemase (275 aa).

Residues 12–13 and 44–45 contribute to the substrate site; these read DS and YG. Cys-75 functions as the Proton donor/acceptor in the catalytic mechanism. 76-77 contacts substrate; that stretch reads NT. Residue Cys-185 is the Proton donor/acceptor of the active site. 186 to 187 contacts substrate; the sequence is TH.

This sequence belongs to the aspartate/glutamate racemases family.

The catalysed reaction is L-glutamate = D-glutamate. The protein operates within cell wall biogenesis; peptidoglycan biosynthesis. Its function is as follows. Provides the (R)-glutamate required for cell wall biosynthesis. The sequence is that of Glutamate racemase from Mycolicibacterium paratuberculosis (strain ATCC BAA-968 / K-10) (Mycobacterium paratuberculosis).